We begin with the raw amino-acid sequence, 415 residues long: L-cysteine:1D-myo-inositol 2-amino-2-deoxy-alpha-D-glucopyranoside ligase (415 aa).

Cys-43 contributes to the Zn(2+) binding site. Residues 43-46, Thr-58, and 81-83 contribute to the L-cysteinyl-5'-AMP site; these read CGIT and NIT. The short motif at 45-55 is the 'HIGH' region element; sequence ITPYDATHLGH. Positions 187-192 match the 'ERGGDP' region motif; it reads ERGGDP. Trp-227 provides a ligand contact to L-cysteinyl-5'-AMP. Residue Cys-231 participates in Zn(2+) binding. Residue 249-251 coordinates L-cysteinyl-5'-AMP; sequence GSD. Position 256 (His-256) interacts with Zn(2+). L-cysteinyl-5'-AMP is bound at residue Ile-283. The 'KMSKS' region motif lies at 289–293; the sequence is KMSKS.

Belongs to the class-I aminoacyl-tRNA synthetase family. MshC subfamily. Monomer. The cofactor is Zn(2+).

It carries out the reaction 1D-myo-inositol 2-amino-2-deoxy-alpha-D-glucopyranoside + L-cysteine + ATP = 1D-myo-inositol 2-(L-cysteinylamino)-2-deoxy-alpha-D-glucopyranoside + AMP + diphosphate + H(+). Its function is as follows. Catalyzes the ATP-dependent condensation of GlcN-Ins and L-cysteine to form L-Cys-GlcN-Ins. This chain is L-cysteine:1D-myo-inositol 2-amino-2-deoxy-alpha-D-glucopyranoside ligase, found in Mycobacterium sp. (strain JLS).